The following is a 282-amino-acid chain: Succinate dehydrogenase [ubiquinone] iron-sulfur subunit, mitochondrial (282 aa).

Residues 1–30 (MAATVGVSLKRGFPAAVLGRVGLQFQACRG) constitute a mitochondrion transit peptide. A 2Fe-2S ferredoxin-type domain is found at 42 to 135 (KKFAIYRWDP…VSKIYPLPHM (94 aa)). Residues lysine 53 and lysine 57 each carry the N6-acetyllysine modification. 4 residues coordinate [2Fe-2S] cluster: cysteine 95, cysteine 100, cysteine 103, and cysteine 115. The segment at 148 to 220 (FYAQYKSIEP…PAVLMQAYRW (73 aa)) is interaction with SDHAF1. The 31-residue stretch at 178–208 (DREKLDGLYECILCACCSTSCPSYWWNGDKY) folds into the 4Fe-4S ferredoxin-type domain. Positions 188, 191, and 194 each coordinate [4Fe-4S] cluster. Residue cysteine 198 participates in [3Fe-4S] cluster binding. Tryptophan 203 is a binding site for a ubiquinone. [3Fe-4S] cluster-binding residues include cysteine 245 and cysteine 251. Position 255 (cysteine 255) interacts with [4Fe-4S] cluster.

It belongs to the succinate dehydrogenase/fumarate reductase iron-sulfur protein family. In terms of assembly, component of complex II composed of four subunits: the flavoprotein (FP) SDHA, iron-sulfur protein (IP) SDHB, and a cytochrome b560 composed of SDHC and SDHD. Interacts with SDHAF1; the interaction is required for iron-sulfur cluster incorporation into SDHB. [2Fe-2S] cluster is required as a cofactor. The cofactor is [3Fe-4S] cluster. It depends on [4Fe-4S] cluster as a cofactor.

The protein localises to the mitochondrion inner membrane. The catalysed reaction is a quinone + succinate = fumarate + a quinol. The enzyme catalyses (R)-malate + a quinone = enol-oxaloacetate + a quinol. It catalyses the reaction (S)-malate + a quinone = enol-oxaloacetate + a quinol. The protein operates within carbohydrate metabolism; tricarboxylic acid cycle; fumarate from succinate (eukaryal route): step 1/1. Its activity is regulated as follows. Enol-oxaloacetate inhibits the succinate dehydrogenase activity. Iron-sulfur protein (IP) subunit of the succinate dehydrogenase complex (mitochondrial respiratory chain complex II), responsible for transferring electrons from succinate to ubiquinone (coenzyme Q). SDH also oxidizes malate to the non-canonical enol form of oxaloacetate, enol-oxaloacetate. Enol-oxaloacetate, which is a potent inhibitor of the succinate dehydrogenase activity, is further isomerized into keto-oxaloacetate. This Mus musculus (Mouse) protein is Succinate dehydrogenase [ubiquinone] iron-sulfur subunit, mitochondrial (Sdhb).